Consider the following 762-residue polypeptide: Subtilisin-like protease SBT3.11 (762 aa).

Positions 1–16 (MMSSIVSWWFFWVISA) are cleaved as a signal peptide. Positions 17–116 (VCILKVEFNI…VTPNTFYELQ (100 aa)) are cleaved as a propeptide — activation peptide. In terms of domain architecture, Inhibitor I9 spans 37-115 (VHIVYLGEKE…QVTPNTFYEL (79 aa)). The 490-residue stretch at 120–609 (TFDYLGLSHS…GGLVNPNKAA (490 aa)) folds into the Peptidase S8 domain. Aspartate 150 (charge relay system) is an active-site residue. A glycan (N-linked (GlcNAc...) asparagine) is linked at asparagine 206. Catalysis depends on histidine 226, which acts as the Charge relay system. Residues asparagine 241 and asparagine 371 are each glycosylated (N-linked (GlcNAc...) asparagine). Catalysis depends on serine 540, which acts as the Charge relay system.

Belongs to the peptidase S8 family.

The protein localises to the secreted. The polypeptide is Subtilisin-like protease SBT3.11 (Arabidopsis thaliana (Mouse-ear cress)).